The primary structure comprises 205 residues: uncharacterized protein (205 aa).

The region spanning 11 to 71 is the HTH tetR-type domain; that stretch reads KTRRALVDAA…EMVDEAGLML (61 aa).

This is an uncharacterized protein from Haemophilus influenzae (strain ATCC 51907 / DSM 11121 / KW20 / Rd).